A 347-amino-acid chain; its full sequence is tRNA N6-adenosine threonylcarbamoyltransferase (347 aa).

2 residues coordinate Fe cation: His115 and His119. Residues 137-141 (LASGG), Asp170, Gly183, and Asn281 each bind substrate. Asp309 lines the Fe cation pocket.

It belongs to the KAE1 / TsaD family. Requires Fe(2+) as cofactor.

It localises to the cytoplasm. The enzyme catalyses L-threonylcarbamoyladenylate + adenosine(37) in tRNA = N(6)-L-threonylcarbamoyladenosine(37) in tRNA + AMP + H(+). Required for the formation of a threonylcarbamoyl group on adenosine at position 37 (t(6)A37) in tRNAs that read codons beginning with adenine. Is involved in the transfer of the threonylcarbamoyl moiety of threonylcarbamoyl-AMP (TC-AMP) to the N6 group of A37, together with TsaE and TsaB. TsaD likely plays a direct catalytic role in this reaction. This chain is tRNA N6-adenosine threonylcarbamoyltransferase, found in Methylorubrum extorquens (strain CM4 / NCIMB 13688) (Methylobacterium extorquens).